The chain runs to 170 residues: Translocator protein 2 (170 aa).

A run of 5 helical transmembrane segments spans residues 3 to 23 (LQGAIFVLLPHLGPILVWLFT), 45 to 65 (VLLLVQTAIYSVVGYASYLVW), 78 to 98 (LPLGLYAVQLTISWTVLVLFF), 104 to 124 (GLALLHLLLLYGLVVSTALIW), and 130 to 150 (LAALLLLPYLAWLTVTSALTY).

This sequence belongs to the TspO/BZRP family. Homotetramer. May also form homodimer. Expressed in erythrocytes (at protein level).

The protein resides in the endoplasmic reticulum membrane. Its subcellular location is the cell membrane. In terms of biological role, cholesterol-binding protein involved in the redistribution of cholesterol from lipid droplets to the endoplasmic reticulum. Required to meet cholesterol demands during erythropoietic differentiation. May play a role in transport processes at the plasma membrane of erythrocytes, including regulating VDAC-mediated ATP export, and import of the heme precursors protoporphyrin IX and 5-aminolevulinic acid. This is Translocator protein 2 (TSPO2) from Homo sapiens (Human).